The chain runs to 267 residues: MKKNIDSNIKTIVSALKTLREQKPLVVNISNYVAMNNTANALLALGASPIMAHSRDEMAEMLSFSGALVVNIGTLDSLWIPRMLFAVEQANIHKKTVVLDPVGCGASSLRTATSWQIAEAANKLIIRGNASEIIALAGEKGQSKGVDSLDSSEAALGAARYLRDTYQCAVVISGATDFIVTAGGQIQLNNGHAMMPYVTAMGCTLSALTGAFAAVGEETGLAAAAVLGVAGEIAAEQSKGPGSLQLNLLDALYQLDEATLIQRLKLS.

Met51 is a binding site for substrate. The ATP site is built by Arg127 and Ser173. A substrate-binding site is contributed by Ala200.

This sequence belongs to the Thz kinase family. It depends on Mg(2+) as a cofactor.

The enzyme catalyses 5-(2-hydroxyethyl)-4-methylthiazole + ATP = 4-methyl-5-(2-phosphooxyethyl)-thiazole + ADP + H(+). The protein operates within cofactor biosynthesis; thiamine diphosphate biosynthesis; 4-methyl-5-(2-phosphoethyl)-thiazole from 5-(2-hydroxyethyl)-4-methylthiazole: step 1/1. In terms of biological role, catalyzes the phosphorylation of the hydroxyl group of 4-methyl-5-beta-hydroxyethylthiazole (THZ). This chain is Hydroxyethylthiazole kinase, found in Psychromonas ingrahamii (strain DSM 17664 / CCUG 51855 / 37).